A 1072-amino-acid chain; its full sequence is Serine/threonine-protein kinase 11-interacting protein (1072 aa).

LRR repeat units follow at residues 109–130 (SLRQ…RGIY), 132–152 (QLES…LSAC), 164–185 (ALLS…LRLL), 187–209 (ALRF…MDLC), 210–231 (ELYH…GPSG), 233–254 (ALGT…EQLK), 255–276 (NLRH…APLW), and 280–301 (ELRK…RAAT). A disordered region spans residues 333-366 (DSSGLGPVIQPLSWPVGSTTETSGGPELSDSLSS). Phosphoserine occurs at positions 388, 390, and 393. Residues 441-454 (MGSSPLSTTKTPAL) show a composition bias toward polar residues. Disordered regions lie at residues 441–522 (MGSS…EQKA) and 741–762 (RPDG…SLSP). Basic and acidic residues-rich tracts occupy residues 478 to 492 (KESP…RVEP) and 501 to 510 (EQDKEEGSRE). A phosphoserine mark is found at S757, S761, and S763. The disordered stretch occupies residues 967-993 (HAESPLPVVSDETSEQPASLGPGPSLQ).

It belongs to the STK11IP family. As to quaternary structure, found in a ternary complex composed of STK11/LKB1, STK11IP and SMAD4. Interacts with SMAD4. Interacts with STK11/LKB1.

The protein resides in the cytoplasm. May regulate STK11/LKB1 function by controlling its subcellular localization. This chain is Serine/threonine-protein kinase 11-interacting protein (Stk11ip), found in Mus musculus (Mouse).